The primary structure comprises 820 residues: Phosphoenolpyruvate synthase (820 aa).

H438 (tele-phosphohistidine intermediate) is an active-site residue. Substrate contacts are provided by R539, R587, E689, G710, S711, N712, and D713. E689 lines the Mg(2+) pocket. D713 contacts Mg(2+). The active-site Proton donor is C762.

Belongs to the PEP-utilizing enzyme family. Mg(2+) serves as cofactor.

It catalyses the reaction pyruvate + ATP + H2O = phosphoenolpyruvate + AMP + phosphate + 2 H(+). It functions in the pathway carbohydrate biosynthesis; gluconeogenesis. Functionally, catalyzes the phosphorylation of pyruvate to phosphoenolpyruvate. This is Phosphoenolpyruvate synthase (ppsA) from Aeropyrum pernix (strain ATCC 700893 / DSM 11879 / JCM 9820 / NBRC 100138 / K1).